We begin with the raw amino-acid sequence, 220 residues long: Transcriptional regulatory protein LnrK (220 aa).

One can recognise a Response regulatory domain in the interval 3–119; the sequence is KIIITDDQDI…TIVKAVMTVH (117 aa). Asp54 carries the 4-aspartylphosphate modification. In terms of domain architecture, HTH luxR-type spans 151–216; the sequence is KPNELLDLTE…QAAIYSVRYG (66 aa). A DNA-binding region (H-T-H motif) is located at residues 175–194; the sequence is NKEIAEKLYITEGTVKNHVS.

Post-translationally, phosphorylated by LnrJ.

It is found in the cytoplasm. Its function is as follows. Required for resistance to linearmycins, a family of antibiotic-specialized metabolites produced by some streptomycetes. Member of the two-component regulatory system LnrJ/LnrK, which induces expression of the LnrLMN ABC transporter in response to linearmycins and other polyenes. Probably binds to the promoter region of the lnrLMN operon and directly regulates its expression. May also promote biofilm formation. The chain is Transcriptional regulatory protein LnrK from Bacillus subtilis (strain 168).